We begin with the raw amino-acid sequence, 331 residues long: MGPQVVASAPEPTRPPSGFVPVSGGGGTHVTQVHIQLAPSPHNGTPEPPRTAPEVGSNSQDGDATPSPPRAQPLVPVAHIRPLPTTVQAASPLPEEPPVPRPPPGFQASVPREASARVVVPIAPTCRSLESSPHSLVPMGPGREHLEEPPMAGPAAEAERVSSPAWASSPTPPSGPHPCPVPKVAPKPRLSGWTWLKKQLLEEAPEPPCPEPRQSLEPEVPTPTEQEVPAPTEQEVPALTAPRAPASRTSRMWDAVLYRMSVAEAQGRLAGPSGGEHTPASLTRLPFLYRPRFNARKLQEATRPPPTVRSILELSPQPKNFNRTATGWRLQ.

Disordered stretches follow at residues 1-112 (MGPQ…SVPR), 128-185 (SLES…PKVA), and 204-247 (APEP…APAS). Residues 94–105 (PEEPPVPRPPPG) are compositionally biased toward pro residues. Residues 149 to 169 (PPMAGPAAEAERVSSPAWASS) show a composition bias toward low complexity. A compositionally biased stretch (pro residues) spans 170 to 185 (PTPPSGPHPCPVPKVA). Residues 217–238 (EPEVPTPTEQEVPAPTEQEVPA) are compositionally biased toward low complexity.

The sequence is that of Proline-rich protein 33 (PRR33) from Homo sapiens (Human).